We begin with the raw amino-acid sequence, 29 residues long: Cytochrome b6-f complex subunit 8 (29 aa).

Residues 3 to 23 (ILTLGWVSILALFTWSIAMVV) traverse the membrane as a helical segment.

Belongs to the PetN family. As to quaternary structure, the 4 large subunits of the cytochrome b6-f complex are cytochrome b6, subunit IV (17 kDa polypeptide, PetD), cytochrome f and the Rieske protein, while the 4 small subunits are PetG, PetL, PetM and PetN. The complex functions as a dimer.

The protein localises to the cellular thylakoid membrane. Functionally, component of the cytochrome b6-f complex, which mediates electron transfer between photosystem II (PSII) and photosystem I (PSI), cyclic electron flow around PSI, and state transitions. This is Cytochrome b6-f complex subunit 8 from Microcystis aeruginosa (strain NIES-843 / IAM M-2473).